The primary structure comprises 361 residues: Ribosomal RNA large subunit methyltransferase M (361 aa).

S-adenosyl-L-methionine is bound by residues Ser-187, 220 to 223 (CPGG), Asp-239, Asp-259, and Asp-276. The Proton acceptor role is filled by Lys-305.

Belongs to the class I-like SAM-binding methyltransferase superfamily. RNA methyltransferase RlmE family. RlmM subfamily. In terms of assembly, monomer.

It localises to the cytoplasm. The catalysed reaction is cytidine(2498) in 23S rRNA + S-adenosyl-L-methionine = 2'-O-methylcytidine(2498) in 23S rRNA + S-adenosyl-L-homocysteine + H(+). Catalyzes the 2'-O-methylation at nucleotide C2498 in 23S rRNA. The sequence is that of Ribosomal RNA large subunit methyltransferase M from Shewanella oneidensis (strain ATCC 700550 / JCM 31522 / CIP 106686 / LMG 19005 / NCIMB 14063 / MR-1).